Consider the following 98-residue polypeptide: Protein FAM24A (98 aa).

Residues 1-29 (MFDLRTKVMIGIASTLLIAAIMLITLVFC) form the signal peptide.

It belongs to the FAM24 family.

It is found in the secreted. The polypeptide is Protein FAM24A (Fam24a) (Mus musculus (Mouse)).